Reading from the N-terminus, the 1538-residue chain is CLIP-associating protein 1 (1538 aa).

HEAT repeat units lie at residues Ala87–Asn124 and Leu163–Glu200. The segment at Ser235–Glu292 is disordered. Ser246 is modified (phosphoserine). The span at Arg251 to Arg268 shows a compositional bias: low complexity. HEAT repeat units follow at residues His405–Thr440 and His441–Thr477. The segment at Ser543–Arg783 is disordered. Ser545, Ser548, Ser558, Ser559, and Ser568 each carry phosphoserine. The span at Ser548 to Leu567 shows a compositional bias: low complexity. Low complexity predominate over residues Thr574–Ser594. The residue at position 600 (Ser600) is a Phosphoserine. Residues Ala606–Ala628 are compositionally biased toward low complexity. Phosphoserine occurs at positions 636, 646, 647, and 649. Polar residues predominate over residues Gln645 to Asp658. Residue Thr656 is modified to Phosphothreonine. The interaction with microtubules, MAPRE1 and MAPRE3 stretch occupies residues Arg662–Pro785. A compositionally biased stretch (low complexity) spans Arg673–Leu692. Ser684, Ser688, Ser695, and Ser705 each carry phosphoserine. Positions Leu693 to Ser705 are enriched in gly residues. Thr711 carries the post-translational modification Phosphothreonine. The residue at position 714 (Ser714) is a Phosphoserine. Residues Gln724–Asn733 show a composition bias toward polar residues. Phosphoserine is present on residues Ser787, Ser797, and Ser823. One copy of the HEAT 5 repeat lies at Gln974–Pro1011. Disordered regions lie at residues His1080 to Gly1120 and Ala1136 to Ala1156. The segment covering Lys1082–Gly1097 has biased composition (polar residues). Ser1091 carries the post-translational modification Phosphoserine. 2 positions are modified to phosphothreonine: Thr1095 and Thr1099. A compositionally biased stretch (low complexity) spans Ser1106–Thr1115. Ser1113 carries the phosphoserine modification. Phosphoserine occurs at positions 1196 and 1223. Residues Val1215–Arg1238 form a disordered region. An interaction with CLIP2 region spans residues Arg1254–Ser1538. The tract at residues Arg1254–Ser1538 is interaction with PHLDB2 and RSN. Positions Phe1256–Ser1538 are localization to kinetochores. The stretch at Asp1299–Lys1330 forms a coiled coil. HEAT repeat units follow at residues Glu1342–Ala1379 and Gln1460–Glu1497.

The protein belongs to the CLASP family. In terms of assembly, interacts with CLIP2, ERC1, MAPRE1, MAPRE3, microtubules, PHLDB2 and RSN. The interaction with ERC1 may be mediated by PHLDB2. Interacts with GCC2; recruits CLASP1 to Golgi membranes. Interacts with MACF1. Interacts with mtcl2 and MTCL1.

The protein resides in the cytoplasm. It is found in the cytoskeleton. Its subcellular location is the microtubule organizing center. It localises to the centrosome. The protein localises to the chromosome. The protein resides in the centromere. It is found in the kinetochore. Its subcellular location is the spindle. It localises to the golgi apparatus. The protein localises to the trans-Golgi network. In terms of biological role, microtubule plus-end tracking protein that promotes the stabilization of dynamic microtubules. Involved in the nucleation of noncentrosomal microtubules originating from the trans-Golgi network (TGN). Required for the polarization of the cytoplasmic microtubule arrays in migrating cells towards the leading edge of the cell. May act at the cell cortex to enhance the frequency of rescue of depolymerizing microtubules by attaching their plus-ends to cortical platforms composed of ERC1 and PHLDB2. This cortical microtubule stabilizing activity is regulated at least in part by phosphatidylinositol 3-kinase signaling. Also performs a similar stabilizing function at the kinetochore which is essential for the bipolar alignment of chromosomes on the mitotic spindle. This is CLIP-associating protein 1 (CLASP1) from Homo sapiens (Human).